Reading from the N-terminus, the 289-residue chain is Acetylglutamate kinase (289 aa).

Substrate contacts are provided by residues Gly-65 to Gly-66, Arg-87, and Asn-187.

The protein belongs to the acetylglutamate kinase family. ArgB subfamily.

The protein resides in the cytoplasm. It catalyses the reaction N-acetyl-L-glutamate + ATP = N-acetyl-L-glutamyl 5-phosphate + ADP. The protein operates within amino-acid biosynthesis; L-arginine biosynthesis; N(2)-acetyl-L-ornithine from L-glutamate: step 2/4. Functionally, catalyzes the ATP-dependent phosphorylation of N-acetyl-L-glutamate. The sequence is that of Acetylglutamate kinase from Chromobacterium violaceum (strain ATCC 12472 / DSM 30191 / JCM 1249 / CCUG 213 / NBRC 12614 / NCIMB 9131 / NCTC 9757 / MK).